The chain runs to 300 residues: Ecto-ADP-ribosyltransferase 4 (300 aa).

The first 23 residues, 1–23 (MALWLPGGQLTLLLLLWVQQTPA), serve as a signal peptide directing secretion. The Extracellular portion of the chain corresponds to 24–269 (GSTEAPLKVD…QLLKACSKKC (246 aa)). Disulfide bonds link Cys-48–Cys-259 and Cys-161–Cys-210. A TR mART core domain is found at 70-255 (KYYSRAWQKA…INLRSAGNMS (186 aa)). Asn-110 and Asn-157 each carry an N-linked (GlcNAc...) asparagine glycan. Gln-185 serves as a coordination point for NAD(+). Asn-201 carries N-linked (GlcNAc...) asparagine glycosylation. Position 219 (Ser-219) interacts with NAD(+). N-linked (GlcNAc...) asparagine glycosylation is present at Asn-253. A lipid anchor (GPI-anchor amidated alanine) is attached at Ala-264. The propeptide at 265–300 (CSKKCAPAPVVIGCLFLVTVVISSKSRAQRNLLAPF) is removed in mature form. The helical transmembrane segment at 270-286 (APAPVVIGCLFLVTVVI) threads the bilayer. At 287-300 (SSKSRAQRNLLAPF) the chain is on the cytoplasmic side.

It belongs to the Arg-specific ADP-ribosyltransferase family.

The protein localises to the membrane. It is found in the cell membrane. The enzyme catalyses L-arginyl-[protein] + NAD(+) = N(omega)-(ADP-D-ribosyl)-L-arginyl-[protein] + nicotinamide + H(+). The polypeptide is Ecto-ADP-ribosyltransferase 4 (Art4) (Mus musculus (Mouse)).